Consider the following 208-residue polypeptide: Large ribosomal subunit protein uL3 (208 aa).

The disordered stretch occupies residues Phe-117 to Pro-149.

This sequence belongs to the universal ribosomal protein uL3 family. Part of the 50S ribosomal subunit. Forms a cluster with proteins L14 and L19.

One of the primary rRNA binding proteins, it binds directly near the 3'-end of the 23S rRNA, where it nucleates assembly of the 50S subunit. This is Large ribosomal subunit protein uL3 from Streptococcus equi subsp. equi (strain 4047).